The sequence spans 238 residues: Flagellar L-ring protein (238 aa).

The N-terminal stretch at 1–16 is a signal peptide; the sequence is MNKAILAVAMVLLLAG. Cysteine 17 carries N-palmitoyl cysteine lipidation. A lipid anchor (S-diacylglycerol cysteine) is attached at cysteine 17.

It belongs to the FlgH family. In terms of assembly, the basal body constitutes a major portion of the flagellar organelle and consists of four rings (L,P,S, and M) mounted on a central rod.

The protein resides in the cell outer membrane. It is found in the bacterial flagellum basal body. Its function is as follows. Assembles around the rod to form the L-ring and probably protects the motor/basal body from shearing forces during rotation. The polypeptide is Flagellar L-ring protein (Brucella melitensis biotype 2 (strain ATCC 23457)).